Reading from the N-terminus, the 40-residue chain is Mu-thomitoxin-Hme1b (40 aa).

Disulfide bonds link cysteine 2–cysteine 18, cysteine 9–cysteine 22, and cysteine 17–cysteine 33.

Belongs to the neurotoxin 19 (CSTX) family. Contains 3 disulfide bonds. As to expression, expressed by the venom gland.

The protein resides in the secreted. Blocks the Nav1.2/SCN2A, Nav1.4/SCN4A, Nav1.5/SCN5A and Nav1.6/SCN8A sodium channels. Shows a slight preference for the Nav1.2 and Nav1.4 channels. Reduces the peak amplitude of the sodium current and negatively shifts the steady-state inactivation process. Does not shift the threshold potential of activation or the voltage corresponding to maximal current. Does not change the reversal potential of the sodium current. May act on site 1 of the receptor. The chain is Mu-thomitoxin-Hme1b from Heriaeus mellotteei (Crab spider).